A 72-amino-acid chain; its full sequence is Omega-conotoxin-like S6.6 (72 aa).

The signal sequence occupies residues 1–22 (MKLTCVVIVAVLLLTACQLLTA). A propeptide spanning residues 23-45 (DDSRGTQKHRALRSDTKLSMSTR) is cleaved from the precursor. Disulfide bonds link Cys-46–Cys-61, Cys-53–Cys-65, and Cys-60–Cys-71. Position 71 is a cysteine amide (Cys-71).

It belongs to the conotoxin O1 superfamily. Expressed by the venom duct.

The protein resides in the secreted. Omega-conotoxins act at presynaptic membranes, they bind and block voltage-gated calcium channels (Cav). This toxin blocks N-, P- and Q-type calcium channels. The chain is Omega-conotoxin-like S6.6 from Conus striatus (Striated cone).